A 66-amino-acid chain; its full sequence is Protein KleD (66 aa).

A DNA-binding region (H-T-H motif) is located at residues 33 to 52 (VAVRSGNEWQQVTKWVEPAR).

The polypeptide is Protein KleD (kleD) (Escherichia coli).